The sequence spans 797 residues: MAP/microtubule affinity-regulating kinase 3 (797 aa).

Residues M1–S35 form a disordered region. The segment covering N11–V28 has biased composition (basic and acidic residues). S42 is subject to Phosphoserine. In terms of domain architecture, Protein kinase spans Y56–I307. Residues I62–V70 and K85 contribute to the ATP site. The active-site Proton acceptor is the D178. T211 is subject to Phosphothreonine; by LKB1. The region spanning I326–G365 is the UBA domain. Residues S368, S374, S376, S380, S383, S400, S419, and S469 each carry the phosphoserine modification. Disordered stretches follow at residues D372–R504 and P585–S701. Residues S374–A385 show a composition bias toward low complexity. Positions S391–S400 are enriched in polar residues. 2 stretches are compositionally biased toward polar residues: residues V492–R504 and P585–T602. Residues S593 and S596 each carry the phosphoserine modification. T602 carries the phosphothreonine modification. A Phosphothreonine; by PKC/PRKCZ modification is found at T617. A phosphoserine mark is found at S636, S651, and S654. Positions P637 to K664 are enriched in polar residues. The span at L669–R678 shows a compositional bias: basic and acidic residues. The residue at position 687 (S687) is a Phosphoserine. The segment covering E689 to P699 has biased composition (basic and acidic residues). In terms of domain architecture, KA1 spans D748–L797.

Belongs to the protein kinase superfamily. CAMK Ser/Thr protein kinase family. SNF1 subfamily. Interacts with MAPT/TAU. Interacts with DLG5 (via coiled-coil domain). Interacts with STK3/MST2 and STK4/MST1 in the presence of DLG5. Interacts with YWHAB, YWHAG, YWHAQ and YWHAZ. Interacts with PKP2 (via N-terminus). Interacts with CDC25C. Interacts with KSR1. In terms of processing, phosphorylated at Thr-211 by STK11/LKB1 in complex with STE20-related adapter-alpha (STRADA) pseudo kinase and CAB39. Phosphorylation at Thr-617 by PRKCZ/aPKC inhibits the kinase activity.

It localises to the cell membrane. It is found in the cell projection. The protein resides in the dendrite. Its subcellular location is the cytoplasm. It carries out the reaction L-seryl-[protein] + ATP = O-phospho-L-seryl-[protein] + ADP + H(+). The catalysed reaction is L-threonyl-[protein] + ATP = O-phospho-L-threonyl-[protein] + ADP + H(+). Its activity is regulated as follows. Activated by phosphorylation on Thr-211. Inhibited by phosphorylation on Thr-617. In terms of biological role, serine/threonine-protein kinase. Involved in the specific phosphorylation of microtubule-associated proteins for MAP2 and MAP4. Phosphorylates the microtubule-associated protein MAPT/TAU. Phosphorylates CDC25C on 'Ser-216'. Regulates localization and activity of some histone deacetylases by mediating phosphorylation of HDAC7, promoting subsequent interaction between HDAC7 and 14-3-3 and export from the nucleus. Regulates localization and activity of MITF by mediating its phosphorylation, promoting subsequent interaction between MITF and 14-3-3 and retention in the cytosol. Negatively regulates the Hippo signaling pathway and antagonizes the phosphorylation of LATS1. Cooperates with DLG5 to inhibit the kinase activity of STK3/MST2 toward LATS1. Phosphorylates PKP2 and KSR1. The chain is MAP/microtubule affinity-regulating kinase 3 (Mark3) from Rattus norvegicus (Rat).